A 347-amino-acid chain; its full sequence is Bombesin receptor-activated protein C6orf89 homolog (347 aa).

Residues 1–58 (MDLAANEISIYDKLSETVDLVRQTGHQCGMSEKAIEKFIRQLLEKNEPQRPPPQYPLL) are Cytoplasmic-facing. A helical transmembrane segment spans residues 59–79 (IVVYKVLATLGLILLTAYFVI). The Extracellular segment spans residues 80-347 (QPFSPLAPEP…ICDGTAFSEL (268 aa)).

Homodimer. Interacts with BRS3. Interacts (via N-terminus) with SIN3B. Glycosylated.

It localises to the golgi apparatus membrane. It is found in the cytoplasm. Exhibits histone deacetylase (HDAC) enhancer properties. May play a role in cell cycle progression and wound repair of bronchial epithelial cells. This Pongo abelii (Sumatran orangutan) protein is Bombesin receptor-activated protein C6orf89 homolog.